A 1180-amino-acid polypeptide reads, in one-letter code: Polyamine-transporting ATPase 13A2 (1180 aa).

Residues 1–44 are Cytoplasmic-facing; it reads MSADSSPLVGSTPTGYGTLTIGTSIDPLSSSVSSVRLSGYCGSP. An intramembrane segment occupies 45–65; sequence WRVIGYHVVVWMMAGIPLLLF. Over 66-235 the chain is Cytoplasmic; sequence RWKPLWGVRL…KSYPQLLVDE (170 aa). At Ser-151 the chain carries Phosphoserine. The helical transmembrane segment at 236-253 threads the bilayer; the sequence is ALNPYYGFQAFSIALWLA. At 254–256 the chain is on the lumenal side; that stretch reads DHY. The helical transmembrane segment at 257 to 276 threads the bilayer; sequence YWYALCIFLISSISICLSLY. The Cytoplasmic portion of the chain corresponds to 277–427; it reads KTRKQSQTLR…NFKFYKHSMK (151 aa). Residues 428–448 form a helical membrane-spanning segment; it reads FVAALSVLALLGTIYSIFILY. At 449–463 the chain is on the lumenal side; the sequence is RNRVPLNEIVIRALD. The chain crosses the membrane as a helical span at residues 464-484; that stretch reads LVTVVVPPALPAAMTVCTLYA. Residues 485-930 lie on the Cytoplasmic side of the membrane; that stretch reads QSRLRRQGIF…REGRCSLDTS (446 aa). Asp-513 functions as the 4-aspartylphosphate intermediate in the catalytic mechanism. Mg(2+) contacts are provided by Asp-878 and Asp-882. Residues 931–951 traverse the membrane as a helical segment; it reads FSVFKYMALYSLTQFISVLIL. The Lumenal portion of the chain corresponds to 952 to 957; that stretch reads YTINTN. Residues 958–978 traverse the membrane as a helical segment; sequence LGDLQFLAIDLVITTTVAVLM. Topologically, residues 979–994 are cytoplasmic; it reads SRTGPALVLGRVRPPG. The helical transmembrane segment at 995–1015 threads the bilayer; that stretch reads ALLSVPVLSSLLLQMVLVTGV. The Lumenal segment spans residues 1016–1048; it reads QLGGYFLTLAQPWFVPLNRTVAAPDNLPNYENT. The N-linked (GlcNAc...) asparagine glycan is linked to Asn-1033. A helical transmembrane segment spans residues 1049–1069; that stretch reads VVFSLSSFQYLILAAAVSKGA. At 1070 to 1080 the chain is on the cytoplasmic side; that stretch reads PFRRPLYTNVP. A helical membrane pass occupies residues 1081-1101; the sequence is FLVALALLSSVLVGLVLVPGL. The Lumenal portion of the chain corresponds to 1102 to 1117; the sequence is LQGPLALRNITDTGFK. Asn-1110 carries N-linked (GlcNAc...) asparagine glycosylation. A helical transmembrane segment spans residues 1118 to 1138; that stretch reads LLLLGLVTLNFVGAFMLESVL. The Cytoplasmic portion of the chain corresponds to 1139–1180; sequence DQCLPACLRRLRPKRASKKRFKQLERELAEQPWPPLPAGPLR.

It belongs to the cation transport ATPase (P-type) (TC 3.A.3) family. Type V subfamily. Interacts with MYCBP2; the interaction inhibits the ubiquitination of TSC2 by MYCBP2. Interacts with HDAC6; the interaction results in recruitment of HDAC6 to lysosomes to promote CTTN deacetylation. In terms of processing, autophosphorylated. Accumulates in an inactive autophosphorylated state and autophosphorylation is stimulated by phosphatidic acid and phosphatidylinositol 3,5-bisphosphate but not by Mn(2+) or Zn(2+). The presence of spermine results in a dose-dependent reduction in autophosphorylation. Expressed in brain; protein levels are markedly increased in brain from subjects with Parkinson disease and subjects with dementia with Lewy bodies. Detected in pyramidal neurons located throughout the cingulate cortex (at protein level). In the substantia nigra, it is found in neuromelanin-positive dopaminergic neurons (at protein level).

It is found in the lysosome membrane. It localises to the late endosome membrane. Its subcellular location is the endosome. The protein localises to the multivesicular body membrane. The protein resides in the cytoplasmic vesicle. It is found in the autophagosome membrane. It catalyses the reaction spermidine(out) + ATP + H2O = spermidine(in) + ADP + phosphate + H(+). It carries out the reaction spermine(out) + ATP + H2O = spermine(in) + ADP + phosphate + H(+). Accumulates in an inactive autophosphorylated state. The presence of spermine results in a dose-dependent reduction in autophosphorylation. Functionally, ATPase which acts as a lysosomal polyamine exporter with high affinity for spermine. Also stimulates cellular uptake of polyamines and protects against polyamine toxicity. Plays a role in intracellular cation homeostasis and the maintenance of neuronal integrity. Contributes to cellular zinc homeostasis. Confers cellular protection against Mn(2+) and Zn(2+) toxicity and mitochondrial stress. Required for proper lysosomal and mitochondrial maintenance. Regulates the autophagy-lysosome pathway through the control of SYT11 expression at both transcriptional and post-translational levels. Facilitates recruitment of deacetylase HDAC6 to lysosomes to deacetylate CTTN, leading to actin polymerization, promotion of autophagosome-lysosome fusion and completion of autophagy. Promotes secretion of exosomes as well as secretion of SCNA via exosomes. Plays a role in lipid homeostasis. The chain is Polyamine-transporting ATPase 13A2 from Homo sapiens (Human).